A 416-amino-acid chain; its full sequence is Tryptophan synthase beta chain (416 aa).

Lys-98 carries the N6-(pyridoxal phosphate)lysine modification.

The protein belongs to the TrpB family. In terms of assembly, tetramer of two alpha and two beta chains. Requires pyridoxal 5'-phosphate as cofactor.

The enzyme catalyses (1S,2R)-1-C-(indol-3-yl)glycerol 3-phosphate + L-serine = D-glyceraldehyde 3-phosphate + L-tryptophan + H2O. Its pathway is amino-acid biosynthesis; L-tryptophan biosynthesis; L-tryptophan from chorismate: step 5/5. The beta subunit is responsible for the synthesis of L-tryptophan from indole and L-serine. This chain is Tryptophan synthase beta chain, found in Ruegeria pomeroyi (strain ATCC 700808 / DSM 15171 / DSS-3) (Silicibacter pomeroyi).